The following is a 230-amino-acid chain: uncharacterized protein (230 aa).

Residues lysine 12 to glutamine 80 form the HTH gntR-type domain. The H-T-H motif DNA-binding region spans glutamate 40–lysine 59.

This is an uncharacterized protein from Escherichia coli (strain K12).